The sequence spans 397 residues: MDPLASSISQFALEFSKELAASAAGKNIFFSPWSISSALAMVYLGARGTTAVEMAKVLQLNRDQADKTGPESEKKRKMEFNLGKAEEIHCDFQTLISEILKPTDAHVLKTANGIYGEKTYPFHNKYLEEVKTYFGAEPQSVNFVEASDQIRKEINSWVESQTQGKILNLLPDDSVDSTTRMILVNALYFKGTWEHQFLAQNTTEKPFRINETTSKPVQMMSMKEKLHVFHIEKPQATGLQLYYERRDVSLFILLPEDLGGLEQLEKAITYEKLNEWTSADMMELYDVQLSLPKFKLEESYDLKSTLSSMGMSDAFNPSKADFSGMSLERNLYLSNIFHKVFVEINEEGTEAAAGTGSEVGFRIKYPSIEFNVDHPFLFFIRHNKTNSILFYGRFCSP.

Positions 74 to 77 (KKRK) match the Nuclear localization signal motif.

The protein belongs to the serpin family. Ov-serpin subfamily.

It localises to the nucleus. The protein localises to the cytoplasm. Protease inhibitor that may play a role in the regulation of protease activities during hematopoiesis and apoptosis induced by TNF. May regulate protease activities in the cytoplasm and in the nucleus. The chain is Serpin B10 (SERPINB10) from Otolemur garnettii (Small-eared galago).